The chain runs to 456 residues: Dihydroorotase (456 aa).

The Zn(2+) site is built by His-60 and His-62. Residues His-62–Arg-64 and Asn-94 contribute to the substrate site. The Zn(2+) site is built by Glu-146, His-180, His-234, and Asp-313. The active site involves Asp-313. Residue His-317 coordinates substrate.

The protein belongs to the metallo-dependent hydrolases superfamily. DHOase family. Class I DHOase subfamily. Zn(2+) is required as a cofactor.

The enzyme catalyses (S)-dihydroorotate + H2O = N-carbamoyl-L-aspartate + H(+). Its pathway is pyrimidine metabolism; UMP biosynthesis via de novo pathway; (S)-dihydroorotate from bicarbonate: step 3/3. In terms of biological role, catalyzes the reversible cyclization of carbamoyl aspartate to dihydroorotate. This Methanosarcina mazei (strain ATCC BAA-159 / DSM 3647 / Goe1 / Go1 / JCM 11833 / OCM 88) (Methanosarcina frisia) protein is Dihydroorotase.